Reading from the N-terminus, the 236-residue chain is MEVFPAVDILSGNCVQLVGGDRLTATVYGSPMDNARRWISEGASNLHVVNLDGAFTASTTNAEMIREVVEKTDVFVQVGGGIRSLEDARGWLNCGVARIILSTFATREPAVIRTLSKEFGSERIMAGVDARRGEIAVSGWQELAGDFIVWAQKFEELGAGSLLYTNVDVEGQQAGIDIEPVQKLLDAVDIPVIVAGGVTTSQDVTALKQLGASGCVLGSALYSGRITLKEALEAAV.

Catalysis depends on Asp-8, which acts as the Proton acceptor. The active-site Proton donor is Asp-129.

The protein belongs to the HisA/HisF family.

It localises to the cytoplasm. The catalysed reaction is 1-(5-phospho-beta-D-ribosyl)-5-[(5-phospho-beta-D-ribosylamino)methylideneamino]imidazole-4-carboxamide = 5-[(5-phospho-1-deoxy-D-ribulos-1-ylimino)methylamino]-1-(5-phospho-beta-D-ribosyl)imidazole-4-carboxamide. The protein operates within amino-acid biosynthesis; L-histidine biosynthesis; L-histidine from 5-phospho-alpha-D-ribose 1-diphosphate: step 4/9. The chain is 1-(5-phosphoribosyl)-5-[(5-phosphoribosylamino)methylideneamino] imidazole-4-carboxamide isomerase from Methanocorpusculum labreanum (strain ATCC 43576 / DSM 4855 / Z).